The primary structure comprises 406 residues: Sorting nexin-6 (406 aa).

M1 is subject to N-acetylmethionine. Position 2 is an N-acetylmethionine; in Sorting nexin-6, N-terminally processed (M2). Residues M2–N179 are interaction with PIM1. Positions L26–L173 constitute a PX domain. Residues S41–K47, F100–K106, and E114–M117 contribute to the a 1,2-diacyl-sn-glycero-3-phospho-(1D-myo-inositol-4,5-bisphosphate) site. Residues S116 and S194 each carry the phosphoserine modification. The membrane-binding amphipathic helix stretch occupies residues E182–I199. The region spanning V203–T406 is the BAR domain.

Belongs to the sorting nexin family. As to quaternary structure, forms heterodimers with BAR domain-containing sorting nexins SNX1 and SNX2. The heterodimers are proposed to self-assemble into helical arrays on the membrane to stabilize and expand local membrane curvature underlying endosomal tubule formation. Thought to be a component of the originally described retromer complex (also called SNX-BAR retromer) which is a pentamer containing the heterotrimeric retromer cargo-selective complex (CSC), also described as vacuolar protein sorting subcomplex (VPS), and a heterodimeric membrane-deforming subcomplex formed between SNX1 or SNX2 and SNX5 or SNX6 (also called SNX-BAR subcomplex); the respective CSC and SNX-BAR subcomplexes associate with low affinity. Interacts with SNX1, SNX2, VPS26A, VPS29, VPS35, CDKN1B, TGFB receptors, BACE1, BRMS1, PIP5K1C isoform 3. Interacts with DCTN1; the association with DCTN1 is involved in movement of retromer-c ontaining vesicles toward the TGN. Interacts with CDKN1B and GIT1. Interacts with PIM1; translocating SNX6 to the nucleus. Post-translationally, in vitro phosphorylated by PIM1; not affecting PIM1-dependent nuclear translocation.

The protein localises to the early endosome. It localises to the early endosome membrane. Its subcellular location is the cytoplasmic vesicle. The protein resides in the cytoplasm. It is found in the nucleus. Functionally, involved in several stages of intracellular trafficking. Interacts with membranes phosphatidylinositol 3,4-bisphosphate and/or phosphatidylinositol 4,5-bisphosphate. Acts in part as component of the retromer membrane-deforming SNX-BAR subcomplex. The SNX-BAR retromer mediates retrograde transport of cargo proteins from endosomes to the trans-Golgi network (TGN) and is involved in endosome-to-plasma membrane transport for cargo protein recycling. The SNX-BAR subcomplex functions to deform the donor membrane into a tubular profile called endosome-to-TGN transport carrier (ETC). Does not have in vitro vesicle-to-membrane remodeling activity. Involved in retrograde endosome-to-TGN transport of lysosomal enzyme receptor IGF2R. May function as link between transport vesicles and dynactin. Negatively regulates retrograde transport of BACE1 from the cell surface to the trans-Golgi network. Involved in E-cadherin sorting and degradation; inhibits PIP5K1C isoform 3-mediated E-cadherin degradation. In association with GIT1 involved in EGFR degradation. Promotes lysosomal degradation of CDKN1B. May contribute to transcription regulation. This chain is Sorting nexin-6 (SNX6), found in Homo sapiens (Human).